A 303-amino-acid chain; its full sequence is Methionyl-tRNA formyltransferase (303 aa).

A (6S)-5,6,7,8-tetrahydrofolate-binding site is contributed by 108 to 111 (SDLP).

It belongs to the Fmt family.

The catalysed reaction is L-methionyl-tRNA(fMet) + (6R)-10-formyltetrahydrofolate = N-formyl-L-methionyl-tRNA(fMet) + (6S)-5,6,7,8-tetrahydrofolate + H(+). Attaches a formyl group to the free amino group of methionyl-tRNA(fMet). The formyl group appears to play a dual role in the initiator identity of N-formylmethionyl-tRNA by promoting its recognition by IF2 and preventing the misappropriation of this tRNA by the elongation apparatus. The sequence is that of Methionyl-tRNA formyltransferase from Rickettsia felis (strain ATCC VR-1525 / URRWXCal2) (Rickettsia azadi).